We begin with the raw amino-acid sequence, 721 residues long: MEGKNTSITFDGREIRLTTGLYAPQAGGAVMIECGDTSLLVTATKTTKKQAADFLPLICDYEEKLYAAGRIPGGFMRREGRPPERATLIARLIDRPMRPLFPSWMRDEIQIVASCLSLDERVPADVLGVTGASIATLLAEIPFYGPMAAVRVGLIGDDFILNPSYREIEKGDLDIVVAGSPEGIVMIEAGANQLSEQDTIEAIDFGYEAVSELIKAQENLLKDLGIKQVKPLEPEEDKALATYLEKNCTKPIDLILKKFDQSKEERDLELDKIELEVQTKIDSLKDDNQLKVLTSENEKLIHSDFKKLTKKLMRSQIINEGKRVDGRDLDEVRKISASAGILPKRVHGSALFQRGLTQVLSTTTLGTPSDAQEMDDLNPSTEKTYLHHYNFPPYSVGETRPMRTPGRREIGHGALAERAITPVLPGKETFPYVLRVVSEVLSSNGSTSMGSVCGSTLSLLDAGVPLKAPVSGTAMGLIKEGKEVRILTDIQGIEDFLGDMDFKVAGTEKGITALQMDMKITGLPVSVISDAIKKARPARLHILEKMQEAIDKPQESLSPHAPRLLSFRIDPELIGTVIGPGGRTIKGITERTNTKIDIEDGGIVTIASHDGAAAEEAQKIIEGLTRKVHEGEIFPGVVTRIIPIGAFVEILPGKEGMVHISQLSEARVERVEDVVRQGDEVTVRVREIDSRGRINLTLRGVAQNGGMSYPEPTPTPVAPLN.

Residues aspartate 495 and aspartate 501 each contribute to the Mg(2+) site. A KH domain is found at 562 to 621 (PRLLSFRIDPELIGTVIGPGGRTIKGITERTNTKIDIEDGGIVTIASHDGAAAEEAQKII). Residues 631 to 699 (GEIFPGVVTR…SRGRINLTLR (69 aa)) enclose the S1 motif domain.

Belongs to the polyribonucleotide nucleotidyltransferase family. Mg(2+) serves as cofactor.

Its subcellular location is the cytoplasm. The catalysed reaction is RNA(n+1) + phosphate = RNA(n) + a ribonucleoside 5'-diphosphate. Involved in mRNA degradation. Catalyzes the phosphorolysis of single-stranded polyribonucleotides processively in the 3'- to 5'-direction. This Prochlorococcus marinus subsp. pastoris (strain CCMP1986 / NIES-2087 / MED4) protein is Polyribonucleotide nucleotidyltransferase.